Here is a 100-residue protein sequence, read N- to C-terminus: Apolipoprotein C-II (100 aa).

An N-terminal signal peptide occupies residues 1-22 (MDSRFLLALFLVLLVLGCEVQA). The interval 66–74 (SVDEKLRDM) is lipid binding. A lipoprotein lipase cofactor region spans residues 78-100 (SSAAMTTYAIIFTDQILTLLKGE).

The protein belongs to the apolipoprotein C2 family. In terms of processing, proapolipoprotein C-II is synthesized as a sialic acid containing glycoprotein which is subsequently desialylated prior to its proteolytic processing. Post-translationally, proapolipoprotein C-II, the major form found in plasma undergoes proteolytic cleavage of its N-terminal hexapeptide to generate the mature form apolipoprotein C-II, which occurs as the minor form in plasma.

It is found in the secreted. Component of chylomicrons, very low-density lipoproteins (VLDL), low-density lipoproteins (LDL), and high-density lipoproteins (HDL) in plasma. Plays an important role in lipoprotein metabolism as an activator of lipoprotein lipase. In Myodes glareolus (Bank vole), this protein is Apolipoprotein C-II (APOC2).